The chain runs to 1003 residues: Glycine--tRNA ligase (1003 aa).

A glycine--tRNA ligase alpha subunit region spans residues 1–310 (MSSQPLTLQT…VTPKKIPTIC (310 aa)). Positions 311-1003 (QPEDFLLEIG…CFGFYAWGVL (693 aa)) are glycine--tRNA ligase beta subunit.

The protein belongs to the class-II aminoacyl-tRNA synthetase family.

The protein localises to the cytoplasm. The catalysed reaction is tRNA(Gly) + glycine + ATP = glycyl-tRNA(Gly) + AMP + diphosphate. This chain is Glycine--tRNA ligase (glyQS), found in Chlamydia trachomatis serovar D (strain ATCC VR-885 / DSM 19411 / UW-3/Cx).